The sequence spans 234 residues: Peptidase E (234 aa).

Active-site charge relay system residues include Ser123, Asp138, and His160.

Belongs to the peptidase S51 family.

The protein resides in the cytoplasm. It carries out the reaction Dipeptidase E catalyzes the hydrolysis of dipeptides Asp-|-Xaa. It does not act on peptides with N-terminal Glu, Asn or Gln, nor does it cleave isoaspartyl peptides.. Hydrolyzes dipeptides containing N-terminal aspartate residues. May play a role in allowing the cell to use peptide aspartate to spare carbon otherwise required for the synthesis of the aspartate family of amino acids. In Actinobacillus pleuropneumoniae serotype 7 (strain AP76), this protein is Peptidase E.